We begin with the raw amino-acid sequence, 272 residues long: Shikimate dehydrogenase (NADP(+)) (272 aa).

Shikimate is bound by residues 14 to 16 and T61; that span reads SKS. K65 acts as the Proton acceptor in catalysis. E77 is a binding site for NADP(+). The shikimate site is built by N86 and D102. NADP(+) is bound by residues 126-130, 150-155, and M213; these read GAGGA and NRTFSK. Residue Y215 coordinates shikimate. G237 contacts NADP(+).

The protein belongs to the shikimate dehydrogenase family. In terms of assembly, homodimer.

The catalysed reaction is shikimate + NADP(+) = 3-dehydroshikimate + NADPH + H(+). It functions in the pathway metabolic intermediate biosynthesis; chorismate biosynthesis; chorismate from D-erythrose 4-phosphate and phosphoenolpyruvate: step 4/7. Involved in the biosynthesis of the chorismate, which leads to the biosynthesis of aromatic amino acids. Catalyzes the reversible NADPH linked reduction of 3-dehydroshikimate (DHSA) to yield shikimate (SA). This Psychromonas ingrahamii (strain DSM 17664 / CCUG 51855 / 37) protein is Shikimate dehydrogenase (NADP(+)).